The primary structure comprises 537 residues: Tyrosine-protein kinase Fyn (537 aa).

Gly2 is lipidated: N-myristoyl glycine. 2 S-palmitoyl cysteine lipidation sites follow: Cys3 and Cys6. Position 12 is a phosphothreonine; by PKC (Thr12). Positions 14-35 (LTEERDGSLNQSSGYRYGTDPT) are disordered. Residues Ser21 and Ser26 each carry the phosphoserine modification. Positions 82 to 143 (TGVTLFVALY…PSNYVAPVDS (62 aa)) constitute an SH3 domain. The region spanning 149-246 (WYFGKLGRKD…GLCCRLVVPC (98 aa)) is the SH2 domain. Tyr185 is modified (phosphotyrosine). Positions 271 to 524 (LQLIKRLGNG…YLQGFLEDYF (254 aa)) constitute a Protein kinase domain. Residues 277–285 (LGNGQFGEV) and Lys299 each bind ATP. Residue Asp390 is the Proton acceptor of the active site. Tyr420 carries the post-translational modification Phosphotyrosine; by autocatalysis. The residue at position 531 (Tyr531) is a Phosphotyrosine; by CSK.

This sequence belongs to the protein kinase superfamily. Tyr protein kinase family. SRC subfamily. In terms of assembly, interacts (via its SH3 domain) with PIK3R1 and PRMT8. Interacts with FYB1, PAG1, and SH2D1A. Interacts with CD79A (tyrosine-phosphorylated form); the interaction increases FYN activity. Interacts (via SH2 domain) with CSF1R (tyrosine phosphorylated). Interacts with TOM1L1 (phosphorylated form). Interacts with KDR (tyrosine phosphorylated). Interacts (via SH3 domain) with KLHL2 (via N-terminus). Interacts with SH2D1A and SLAMF1. Interacts with ITCH; the interaction phosphorylates ITCH and negatively regulates its activity. Interacts with FASLG. Interacts with RUNX3. Interacts with KIT. Interacts with EPHA8; possible downstream effector of EPHA8 in regulation of cell adhesion. Interacts with PTK2/FAK1; this interaction leads to PTK2/FAK1 phosphorylation and activation. Interacts with CAV1; this interaction couples integrins to the Ras-ERK pathway. Interacts with UNC119. Interacts (via SH2 domain) with PTPRH (phosphorylated form). Interacts with PTPRO (phosphorylated form). Interacts with PTPRB (phosphorylated form). Interacts with FYB2. Interacts with DSCAM. Interacts with SKAP1 and FYB1; this interaction promotes the phosphorylation of CLNK. Interacts with NEDD9; in the presence of PTK2. It depends on Mn(2+) as a cofactor. In terms of processing, autophosphorylated at Tyr-420. Phosphorylation on the C-terminal tail at Tyr-531 by CSK maintains the enzyme in an inactive state. PTPRC/CD45 dephosphorylates Tyr-531 leading to activation. Ultraviolet B (UVB) strongly increase phosphorylation at Thr-12 and kinase activity, and promotes translocation from the cytoplasm to the nucleus. Dephosphorylation at Tyr-420 by PTPN2 negatively regulates T-cell receptor signaling. Phosphorylated at tyrosine residues, which can be enhanced by NTN1. Post-translationally, palmitoylated. Palmitoylation at Cys-3 and Cys-6, probably by ZDHHC21, regulates subcellular location.

The protein resides in the cytoplasm. The protein localises to the nucleus. It localises to the cell membrane. It is found in the perikaryon. It catalyses the reaction L-tyrosyl-[protein] + ATP = O-phospho-L-tyrosyl-[protein] + ADP + H(+). Inhibited by phosphorylation of Tyr-531 by leukocyte common antigen and activated by dephosphorylation of this site. In terms of biological role, non-receptor tyrosine-protein kinase that plays a role in many biological processes including regulation of cell growth and survival, cell adhesion, integrin-mediated signaling, cytoskeletal remodeling, cell motility, immune response and axon guidance. Inactive FYN is phosphorylated on its C-terminal tail within the catalytic domain. Following activation by PKA, the protein subsequently associates with PTK2/FAK1, allowing PTK2/FAK1 phosphorylation, activation and targeting to focal adhesions. Involved in the regulation of cell adhesion and motility through phosphorylation of CTNNB1 (beta-catenin) and CTNND1 (delta-catenin). Regulates cytoskeletal remodeling by phosphorylating several proteins including the actin regulator WAS and the microtubule-associated proteins MAP2 and MAPT. Promotes cell survival by phosphorylating AGAP2/PIKE-A and preventing its apoptotic cleavage. Participates in signal transduction pathways that regulate the integrity of the glomerular slit diaphragm (an essential part of the glomerular filter of the kidney) by phosphorylating several slit diaphragm components including NPHS1, KIRREL1 and TRPC6. Plays a role in neural processes by phosphorylating DPYSL2, a multifunctional adapter protein within the central nervous system, ARHGAP32, a regulator for Rho family GTPases implicated in various neural functions, and SNCA, a small pre-synaptic protein. Involved in reelin signaling by mediating phosphorylation of DAB1 following reelin (RELN)-binding to its receptor. Participates in the downstream signaling pathways that lead to T-cell differentiation and proliferation following T-cell receptor (TCR) stimulation. Phosphorylates PTK2B/PYK2 in response to T-cell receptor activation. Also participates in negative feedback regulation of TCR signaling through phosphorylation of PAG1, thereby promoting interaction between PAG1 and CSK and recruitment of CSK to lipid rafts. CSK maintains LCK and FYN in an inactive form. Promotes CD28-induced phosphorylation of VAV1. In mast cells, phosphorylates CLNK after activation of immunoglobulin epsilon receptor signaling. Can also promote CD244-mediated NK cell activation. The polypeptide is Tyrosine-protein kinase Fyn (Bos taurus (Bovine)).